Reading from the N-terminus, the 213-residue chain is Phosphatidylserine decarboxylase proenzyme (213 aa).

Serine 183 (schiff-base intermediate with substrate; via pyruvic acid) is an active-site residue. Residue serine 183 is modified to Pyruvic acid (Ser); by autocatalysis.

Belongs to the phosphatidylserine decarboxylase family. PSD-A subfamily. Heterodimer of a large membrane-associated beta subunit and a small pyruvoyl-containing alpha subunit. Requires pyruvate as cofactor. Post-translationally, is synthesized initially as an inactive proenzyme. Formation of the active enzyme involves a self-maturation process in which the active site pyruvoyl group is generated from an internal serine residue via an autocatalytic post-translational modification. Two non-identical subunits are generated from the proenzyme in this reaction, and the pyruvate is formed at the N-terminus of the alpha chain, which is derived from the carboxyl end of the proenzyme. The post-translation cleavage follows an unusual pathway, termed non-hydrolytic serinolysis, in which the side chain hydroxyl group of the serine supplies its oxygen atom to form the C-terminus of the beta chain, while the remainder of the serine residue undergoes an oxidative deamination to produce ammonia and the pyruvoyl prosthetic group on the alpha chain.

It localises to the cell membrane. It carries out the reaction a 1,2-diacyl-sn-glycero-3-phospho-L-serine + H(+) = a 1,2-diacyl-sn-glycero-3-phosphoethanolamine + CO2. The protein operates within phospholipid metabolism; phosphatidylethanolamine biosynthesis; phosphatidylethanolamine from CDP-diacylglycerol: step 2/2. Its function is as follows. Catalyzes the formation of phosphatidylethanolamine (PtdEtn) from phosphatidylserine (PtdSer). In Syntrophus aciditrophicus (strain SB), this protein is Phosphatidylserine decarboxylase proenzyme.